Reading from the N-terminus, the 214-residue chain is Imidazole glycerol phosphate synthase subunit HisH 2 (214 aa).

In terms of domain architecture, Glutamine amidotransferase type-1 spans lysine 2–glycine 210. Cysteine 82 serves as the catalytic Nucleophile. Residues histidine 185 and glutamate 187 contribute to the active site.

As to quaternary structure, heterodimer of HisH and HisF.

The protein resides in the cytoplasm. It carries out the reaction 5-[(5-phospho-1-deoxy-D-ribulos-1-ylimino)methylamino]-1-(5-phospho-beta-D-ribosyl)imidazole-4-carboxamide + L-glutamine = D-erythro-1-(imidazol-4-yl)glycerol 3-phosphate + 5-amino-1-(5-phospho-beta-D-ribosyl)imidazole-4-carboxamide + L-glutamate + H(+). The enzyme catalyses L-glutamine + H2O = L-glutamate + NH4(+). The protein operates within amino-acid biosynthesis; L-histidine biosynthesis; L-histidine from 5-phospho-alpha-D-ribose 1-diphosphate: step 5/9. Its function is as follows. IGPS catalyzes the conversion of PRFAR and glutamine to IGP, AICAR and glutamate. The HisH subunit provides the glutamine amidotransferase activity that produces the ammonia necessary to HisF for the synthesis of IGP and AICAR. This Vibrio vulnificus (strain YJ016) protein is Imidazole glycerol phosphate synthase subunit HisH 2 (hisH2).